Here is a 420-residue protein sequence, read N- to C-terminus: Proteasome-activating nucleotidase (420 aa).

A disordered region spans residues methionine 1–glutamate 25. Positions glutamate 22 to serine 79 form a coiled coil. Residues glycine 203 to leucine 208 and histidine 342 each bind ATP. Positions methionine 418–valine 420 are docks into pockets in the proteasome alpha-ring to cause gate opening.

This sequence belongs to the AAA ATPase family. Homohexamer. The hexameric complex has a two-ring architecture resembling a top hat that caps the 20S proteasome core at one or both ends. Upon ATP-binding, the C-terminus of PAN interacts with the alpha-rings of the proteasome core by binding to the intersubunit pockets.

It localises to the cytoplasm. In terms of biological role, ATPase which is responsible for recognizing, binding, unfolding and translocation of substrate proteins into the archaeal 20S proteasome core particle. Is essential for opening the gate of the 20S proteasome via an interaction with its C-terminus, thereby allowing substrate entry and access to the site of proteolysis. Thus, the C-termini of the proteasomal ATPase function like a 'key in a lock' to induce gate opening and therefore regulate proteolysis. Unfolding activity requires energy from ATP hydrolysis, whereas ATP binding alone promotes ATPase-20S proteasome association which triggers gate opening, and supports translocation of unfolded substrates. The protein is Proteasome-activating nucleotidase of Methanosarcina mazei (strain ATCC BAA-159 / DSM 3647 / Goe1 / Go1 / JCM 11833 / OCM 88) (Methanosarcina frisia).